The following is a 297-amino-acid chain: Nucleotide-binding protein BMA10229_A1510 (297 aa).

Residue 8–15 (GISGSGKS) coordinates ATP. 57-60 (DARS) lines the GTP pocket.

This sequence belongs to the RapZ-like family.

Displays ATPase and GTPase activities. This Burkholderia mallei (strain NCTC 10229) protein is Nucleotide-binding protein BMA10229_A1510.